A 212-amino-acid polypeptide reads, in one-letter code: Hevein-like preproprotein (212 aa).

An N-terminal signal peptide occupies residues methionine 1 to glycine 21. One can recognise a Chitin-binding type-1 domain in the interval glutamine 22–glycine 64. 7 cysteine pairs are disulfide-bonded: cysteine 24–cysteine 39, cysteine 33–cysteine 45, cysteine 38–cysteine 52, cysteine 58–cysteine 62, cysteine 100–cysteine 132, cysteine 121–cysteine 155, and cysteine 135–cysteine 191. The Barwin domain occupies glutamate 72–asparagine 193.

As to quaternary structure, CB-HEL interacts strongly with a fungal fruiting body lectin.

The protein localises to the vacuole. Fungal growth inhibitors. Neither CB-HEL nor CD-HEL have chitinase activity, but both have antimicrobial activities. CD-HEL has RNase, but no DNase activity. The protein is Hevein-like preproprotein (HEL) of Arabidopsis thaliana (Mouse-ear cress).